Reading from the N-terminus, the 663-residue chain is 72 kDa type IV collagenase (663 aa).

Residues 1–26 (MKTHSVFGFFFKVLLIQVYLFNKTLA) form the signal peptide. The propeptide at 27–106 (APSPIIKFPG…PRCGNPDVAN (80 aa)) is activation peptide. The Cysteine switch motif lies at 97-104 (PRCGNPDV). Position 99 (cysteine 99) interacts with Zn(2+). Residues 107 to 218 (YNFFPRKPKW…LWTLGEGQVV (112 aa)) form a collagenase-like 1 region. Residues aspartate 131 and aspartate 165 each contribute to the Ca(2+) site. Histidine 175 and aspartate 177 together coordinate Zn(2+). Residues aspartate 182 and glycine 183 each coordinate Ca(2+). Residue histidine 190 coordinates Zn(2+). 3 residues coordinate Ca(2+): glycine 197, glycine 199, and aspartate 201. Histidine 203 contributes to the Zn(2+) binding site. Ca(2+) is bound by residues aspartate 205, aspartate 206, and glutamate 208. Positions 219-393 (RVKYGNADGE…WGFCPDQGYS (175 aa)) are collagen-binding. 3 consecutive Fibronectin type-II domains span residues 225–273 (ADGE…FCPH), 283–331 (GDGQ…FCPE), and 341–389 (SEGA…FCPD). 6 disulfide bridges follow: cysteine 230/cysteine 256, cysteine 244/cysteine 271, cysteine 288/cysteine 314, cysteine 302/cysteine 329, cysteine 346/cysteine 372, and cysteine 360/cysteine 387. Residues 394–468 (LFLVAAHEFG…GPRPTLGPVT (75 aa)) form a collagenase-like 2 region. Position 400 (histidine 400) interacts with Zn(2+). The active site involves glutamate 401. Positions 404 and 410 each coordinate Zn(2+). The segment at 445–464 (SPDVEPGPGPGPGPGPRPTL) is disordered. The segment covering 449–463 (EPGPGPGPGPGPRPT) has biased composition (pro residues). A disulfide bridge links cysteine 472 with cysteine 663. Hemopexin repeat units lie at residues 475-519 (DIVF…WPDL), 520-566 (PEKI…GLPP), 568-616 (VQRI…WNGV), and 617-663 (PDNL…WLGC). Ca(2+) is bound by residues aspartate 479, aspartate 524, aspartate 572, and aspartate 621.

The protein belongs to the peptidase M10A family. In terms of assembly, ligand for integrin alpha-V/beta-3. The cofactor is Ca(2+). It depends on Zn(2+) as a cofactor. In terms of processing, the propeptide is processed by MMP14 (MT-MMP1) and MMP16 (MT-MMP3). In terms of tissue distribution, produced by normal skin fibroblasts.

Its subcellular location is the secreted. The protein localises to the extracellular space. It is found in the extracellular matrix. The catalysed reaction is Cleavage of gelatin type I and collagen types IV, V, VII, X. Cleaves the collagen-like sequence Pro-Gln-Gly-|-Ile-Ala-Gly-Gln.. In Gallus gallus (Chicken), this protein is 72 kDa type IV collagenase (MMP2).